Reading from the N-terminus, the 92-residue chain is Phospholemman (92 aa).

An N-terminal signal peptide occupies residues 1-20 (MAYLHHTLLVCMGLLAMANA). Topologically, residues 22–35 (APQEQDPFTYDYQS) are extracellular. Residues 36–56 (LRIGGLIIAGILFILGILIIL) form a helical membrane-spanning segment. Over 57–92 (KRGAWERFDTARRTGEPDEEEGTFRSSIRRLSTRRR) the chain is Cytoplasmic. The interval 67–92 (ARRTGEPDEEEGTFRSSIRRLSTRRR) is disordered. At T79 the chain carries Phosphothreonine. Position 82 is a phosphoserine (S82). S83 bears the Phosphoserine; by PKA and PKC mark. Basic residues predominate over residues 83–92 (SIRRLSTRRR). S88 is subject to Phosphoserine; by PKA. T89 bears the Phosphothreonine; by PKC mark.

This sequence belongs to the FXYD family. In terms of assembly, homotetramer. Monomer. Regulatory subunit of the sodium/potassium-transporting ATPase (NKA) which is composed of a catalytic alpha subunit, a non-catalytic beta subunit and an additional regulatory subunit. The monomeric form associates with NKA while the oligomeric form does not. Interacts with the catalytic alpha-1 subunit ATP1A1. Also interacts with the catalytic alpha-2 and alpha-3 subunits ATP1A2 and ATP1A3. Very little interaction with ATP1A1, ATP1A2 or ATP1A3 when phosphorylated at Ser-83. Interacts with the non-catalytic beta-1 subunit ATP1B1. Oxidative stress decreases interaction with ATP1A1 but increases interaction with ATP1B1. Post-translationally, major plasma membrane substrate for cAMP-dependent protein kinase (PKA) and protein kinase C (PKC) in several different tissues. Phosphorylated in response to insulin and adrenergic stimulation. Phosphorylation at Ser-88 stimulates sodium/potassium-transporting ATPase activity while the unphosphorylated form inhibits sodium/potassium-transporting ATPase activity. Phosphorylation increases tetramerization, decreases binding to ATP1A1 and reduces inhibition of ATP1A1 activity. Phosphorylation at Ser-83 leads to greatly reduced interaction with ATP1A1, ATP1A2 and ATP1A3. May be phosphorylated by DMPK. Palmitoylation increases half-life and stability and is enhanced upon phosphorylation at Ser-88 by PKA. In terms of processing, glutathionylated. Expressed in ventricular myocytes (at protein level).

Its subcellular location is the cell membrane. It is found in the sarcolemma. The protein localises to the apical cell membrane. The protein resides in the membrane. It localises to the caveola. Its subcellular location is the T-tubule. Functionally, associates with and regulates the activity of the sodium/potassium-transporting ATPase (NKA) which transports Na(+) out of the cell and K(+) into the cell. Inhibits NKA activity in its unphosphorylated state and stimulates activity when phosphorylated. Reduces glutathionylation of the NKA beta-1 subunit ATP1B1, thus reversing glutathionylation-mediated inhibition of ATP1B1. Contributes to female sexual development by maintaining the excitability of neurons which secrete gonadotropin-releasing hormone. The protein is Phospholemman of Oryctolagus cuniculus (Rabbit).